The following is a 516-amino-acid chain: Acyl-lipid (7-3)-desaturase, chloroplastic (516 aa).

The segment at 1-25 (MNATMQRSAVAGRTSGKVATTARAS) is disordered. Residues 1–47 (MNATMQRSAVAGRTSGKVATTARASSMARPRLPIAGRVARRSAVTVR) constitute a chloroplast transit peptide. The region spanning 83-148 (WTVYRGVAYD…LADFPVDAVP (66 aa)) is the Cytochrome b5 heme-binding domain. Positions 100 and 123 each coordinate heme. Transmembrane regions (helical) follow at residues 186–206 (GAAF…TYDA) and 209–229 (LTGA…QHCG). The Histidine box-1 motif lies at 227 to 231 (HCGNH). Positions 262 to 267 (HQVSHH) match the Histidine box-2 motif. 4 consecutive transmembrane segments (helical) span residues 305–325 (MWAL…QALL), 354–374 (FLLY…GGAA), 375–395 (GYLF…HNVP), and 423–443 (VLTS…GLNL). The Histidine box-3 signature appears at 444-448 (QIEHH).

It belongs to the fatty acid desaturase type 1 family. It depends on Fe(2+) as a cofactor.

The protein localises to the plastid. It localises to the chloroplast membrane. The catalysed reaction is a (7Z,10Z,13Z,16Z,19Z)-docosapentaenoyl-containing glycerolipid + 2 Fe(II)-[cytochrome b5] + O2 + 2 H(+) = a (4Z,7Z,10Z,13Z,16Z,19Z)-docosahexaenoyl-containing glycerolipid + 2 Fe(III)-[cytochrome b5] + 2 H2O. The enzyme catalyses a (7Z,10Z,13Z,16Z)-docosatetraenoyl-containing glycerolipid + 2 Fe(II)-[cytochrome b5] + O2 + 2 H(+) = a (4Z,7Z,10Z,13Z,16Z)-docosapentaenoyl-containing glycerolipid + 2 Fe(III)-[cytochrome b5] + 2 H2O. In terms of biological role, fatty acid desaturase that introduces a cis double bond at the 4-position in 16-carbon polyunsaturated fatty acids that contain a Delta(7) double bond, resulting in the production of 16 carbon fatty acid (7Z,10Z,13Z)-hexadeca-7,10,13-trienoate. This chain is Acyl-lipid (7-3)-desaturase, chloroplastic, found in Chlamydomonas reinhardtii (Chlamydomonas smithii).